Reading from the N-terminus, the 278-residue chain is Dermonecrotic toxin LhSicTox-alphaIV1ii (278 aa).

His-5 is an active-site residue. Mg(2+) is bound by residues Glu-25 and Asp-27. The Nucleophile role is filled by His-41. 2 cysteine pairs are disulfide-bonded: Cys-45–Cys-51 and Cys-47–Cys-192. A Mg(2+)-binding site is contributed by Asp-85.

It belongs to the arthropod phospholipase D family. Class II subfamily. The cofactor is Mg(2+). Expressed by the venom gland.

Its subcellular location is the secreted. It carries out the reaction an N-(acyl)-sphingosylphosphocholine = an N-(acyl)-sphingosyl-1,3-cyclic phosphate + choline. The catalysed reaction is an N-(acyl)-sphingosylphosphoethanolamine = an N-(acyl)-sphingosyl-1,3-cyclic phosphate + ethanolamine. It catalyses the reaction a 1-acyl-sn-glycero-3-phosphocholine = a 1-acyl-sn-glycero-2,3-cyclic phosphate + choline. The enzyme catalyses a 1-acyl-sn-glycero-3-phosphoethanolamine = a 1-acyl-sn-glycero-2,3-cyclic phosphate + ethanolamine. Functionally, dermonecrotic toxins cleave the phosphodiester linkage between the phosphate and headgroup of certain phospholipids (sphingolipid and lysolipid substrates), forming an alcohol (often choline) and a cyclic phosphate. This toxin acts on sphingomyelin (SM). It may also act on ceramide phosphoethanolamine (CPE), lysophosphatidylcholine (LPC) and lysophosphatidylethanolamine (LPE), but not on lysophosphatidylserine (LPS), and lysophosphatidylglycerol (LPG). It acts by transphosphatidylation, releasing exclusively cyclic phosphate products as second products. Induces dermonecrosis, hemolysis, increased vascular permeability, edema, inflammatory response, and platelet aggregation. This chain is Dermonecrotic toxin LhSicTox-alphaIV1ii, found in Loxosceles hirsuta (Recluse spider).